A 149-amino-acid polypeptide reads, in one-letter code: Small ribosomal subunit protein bS18c (149 aa).

The tract at residues 1 to 23 (MDKITGPFRKSKKSFRKPLPPIQ) is disordered.

It belongs to the bacterial ribosomal protein bS18 family. Part of the 30S ribosomal subunit.

Its subcellular location is the plastid. The polypeptide is Small ribosomal subunit protein bS18c (Cuscuta obtusiflora (Peruvian dodder)).